Here is a 609-residue protein sequence, read N- to C-terminus: UvrABC system protein C (609 aa).

The GIY-YIG domain maps to 15–92 (TGSGVYQMQD…IKQFRPRYNV (78 aa)). A UVR domain is found at 202-237 (DQVIIKLTERMEVASENLVFEEAAHYRDQIRQLRRL).

Belongs to the UvrC family. As to quaternary structure, interacts with UvrB in an incision complex.

It is found in the cytoplasm. The UvrABC repair system catalyzes the recognition and processing of DNA lesions. UvrC both incises the 5' and 3' sides of the lesion. The N-terminal half is responsible for the 3' incision and the C-terminal half is responsible for the 5' incision. In Coxiella burnetii (strain CbuG_Q212) (Coxiella burnetii (strain Q212)), this protein is UvrABC system protein C.